A 238-amino-acid chain; its full sequence is uncharacterized protein (238 aa).

3 helical membrane passes run 75–95 (YAIFHIFLPFILTLLLYHNFY), 116–136 (IVLIFTYVMTVIIVYFSFSLI), and 172–192 (IQGLAHIILSLLLFILGLEVI). The tract at residues 200–238 (DVEMSSMRGQAITTEPASDNTMAEETDCNTSKDVESGSN) is disordered. Residues 206 to 220 (MRGQAITTEPASDNT) show a composition bias toward polar residues. Residues 229-238 (TSKDVESGSN) are compositionally biased toward basic and acidic residues.

It is found in the membrane. This is an uncharacterized protein from Schizosaccharomyces pombe (strain 972 / ATCC 24843) (Fission yeast).